A 477-amino-acid chain; its full sequence is UDP-N-acetylmuramate--L-alanine ligase (477 aa).

122-128 (GTHGKTT) provides a ligand contact to ATP.

This sequence belongs to the MurCDEF family.

Its subcellular location is the cytoplasm. It catalyses the reaction UDP-N-acetyl-alpha-D-muramate + L-alanine + ATP = UDP-N-acetyl-alpha-D-muramoyl-L-alanine + ADP + phosphate + H(+). It functions in the pathway cell wall biogenesis; peptidoglycan biosynthesis. Cell wall formation. This Xanthomonas campestris pv. campestris (strain 8004) protein is UDP-N-acetylmuramate--L-alanine ligase.